We begin with the raw amino-acid sequence, 160 residues long: Probable dihydroneopterin aldolase 3 (160 aa).

Substrate is bound by residues Glu59, Phe91, and 110-111; that span reads YE. Catalysis depends on Lys137, which acts as the Proton donor/acceptor.

It belongs to the DHNA family. As to quaternary structure, homooctamer. Forms a hollow cylinder assembled from two ring-shaped tetramers. Expressed at very low levels in siliques.

The enzyme catalyses 7,8-dihydroneopterin = 6-hydroxymethyl-7,8-dihydropterin + glycolaldehyde. The protein operates within cofactor biosynthesis; tetrahydrofolate biosynthesis; 2-amino-4-hydroxy-6-hydroxymethyl-7,8-dihydropteridine diphosphate from 7,8-dihydroneopterin triphosphate: step 3/4. Functionally, catalyzes the conversion of 7,8-dihydroneopterin into 6-hydroxymethyl-7,8-dihydropterin, a biosynthetic precursor of the vitamin tetrahydrofolate. Can use L-threo-dihydroneopterin and D-erythro-dihydroneopterin as substrates for the formation of 6-hydroxymethyldihydropterin, but it can also catalyze the epimerization of carbon 2' of dihydroneopterin and dihydromonapterin. The chain is Probable dihydroneopterin aldolase 3 from Arabidopsis thaliana (Mouse-ear cress).